Consider the following 922-residue polypeptide: Alpha-actinin, sarcomeric (922 aa).

The actin-binding stretch occupies residues 1 to 252; it reads MMENGGYVGQ…IMTYVSCYYH (252 aa). Calponin-homology (CH) domains are found at residues 36–140 and 149–255; these read KQQK…LRFA and MTAK…HAFQ. 4 Spectrin repeats span residues 253–393, 394–508, 509–629, and 630–742; these read AFQG…MVSD, ITNS…RCQR, ICDQ…SADL, and ISRK…TMET. EF-hand domains follow at residues 776–811 and 817–852; these read EQLT…LGYS and QGDM…ESTD. Ca(2+) contacts are provided by Asp789, Asn791, Thr793, Arg795, and Glu800.

Belongs to the alpha-actinin family. In terms of assembly, homodimer; antiparallel.

F-actin cross-linking protein which is thought to anchor actin to a variety of intracellular structures. This is a bundling protein. In Anopheles gambiae (African malaria mosquito), this protein is Alpha-actinin, sarcomeric (Actn).